The following is a 382-amino-acid chain: MTDQRPLTIALVAGETSGDILGAGLIRALKERVPNARFVGVAGPRMQAEGCEAWYEIEELAVMGIVEVLGRLRRLLHIRADLTKRFGELKPDVFVGIDAPDFNITLEGNLKKQGIKTIHYVSPSVWAWRQKRVFKIGRATDLVLAFLPFEKAFYDKYNVPCRFIGHTMADAMPLDPDKNGARDVLGIPYDAHCLALLPGSRGAEVEMLSADFLKTAQLLRQTYPDLEIVVPLVNAKRREQFERIKAEVAPDLSVHLLDGMGREAMVASDAALLASGTAALECMLAKCPMVVGYRMKPFTFWLAKRLVKTDYVSLPNLLAGRELVKELLQEECEPQKLAAALLPLLANGKTSHAMHDTFRELHQQIRCNADEQAAQAVLELAQ.

The protein belongs to the LpxB family.

The catalysed reaction is 2-N,3-O-bis[(3R)-3-hydroxytetradecanoyl]-alpha-D-glucosaminyl 1-phosphate + UDP-2-N,3-O-bis[(3R)-3-hydroxytetradecanoyl]-alpha-D-glucosamine = lipid A disaccharide (E. coli) + UDP + H(+). It catalyses the reaction a lipid X + a UDP-2-N,3-O-bis[(3R)-3-hydroxyacyl]-alpha-D-glucosamine = a lipid A disaccharide + UDP + H(+). It functions in the pathway glycolipid biosynthesis; lipid IV(A) biosynthesis; lipid IV(A) from (3R)-3-hydroxytetradecanoyl-[acyl-carrier-protein] and UDP-N-acetyl-alpha-D-glucosamine: step 5/6. In terms of biological role, condensation of UDP-2,3-diacylglucosamine and 2,3-diacylglucosamine-1-phosphate to form lipid A disaccharide, a precursor of lipid A, a phosphorylated glycolipid that anchors the lipopolysaccharide to the outer membrane of the cell. This Shigella flexneri serotype 5b (strain 8401) protein is Lipid-A-disaccharide synthase.